We begin with the raw amino-acid sequence, 92 residues long: Small ribosomal subunit protein uS19c (92 aa).

This sequence belongs to the universal ribosomal protein uS19 family.

The protein resides in the plastid. It is found in the chloroplast. Protein S19 forms a complex with S13 that binds strongly to the 16S ribosomal RNA. In Lobularia maritima (Sweet alyssum), this protein is Small ribosomal subunit protein uS19c.